The following is a 122-amino-acid chain: Ribosome-binding factor A (122 aa).

It belongs to the RbfA family. In terms of assembly, monomer. Binds 30S ribosomal subunits, but not 50S ribosomal subunits or 70S ribosomes.

The protein resides in the cytoplasm. Its function is as follows. One of several proteins that assist in the late maturation steps of the functional core of the 30S ribosomal subunit. Associates with free 30S ribosomal subunits (but not with 30S subunits that are part of 70S ribosomes or polysomes). Required for efficient processing of 16S rRNA. May interact with the 5'-terminal helix region of 16S rRNA. This is Ribosome-binding factor A from Geotalea uraniireducens (strain Rf4) (Geobacter uraniireducens).